We begin with the raw amino-acid sequence, 492 residues long: 3-octaprenyl-4-hydroxybenzoate carboxy-lyase (492 aa).

Asn-175 contributes to the Mn(2+) binding site. Residues 178-180 (IYR), 192-194 (RWL), and 197-198 (RG) each bind prenylated FMN. Glu-241 is a Mn(2+) binding site. Residue Asp-290 is the Proton donor of the active site.

It belongs to the UbiD family. As to quaternary structure, homohexamer. Prenylated FMN serves as cofactor. It depends on Mn(2+) as a cofactor.

The protein resides in the cell membrane. The catalysed reaction is a 4-hydroxy-3-(all-trans-polyprenyl)benzoate + H(+) = a 2-(all-trans-polyprenyl)phenol + CO2. Its pathway is cofactor biosynthesis; ubiquinone biosynthesis. Catalyzes the decarboxylation of 3-octaprenyl-4-hydroxy benzoate to 2-octaprenylphenol, an intermediate step in ubiquinone biosynthesis. The protein is 3-octaprenyl-4-hydroxybenzoate carboxy-lyase of Salmonella typhimurium (strain LT2 / SGSC1412 / ATCC 700720).